A 217-amino-acid chain; its full sequence is Protein DJ-1alpha (217 aa).

Cys133 acts as the Nucleophile in catalysis. Cys133 carries the post-translational modification Cysteine sulfinic acid (-SO2H); alternate.

Expressed in testis (at protein level).

It is found in the cytoplasm. Its subcellular location is the nucleus. The protein localises to the mitochondrion. Functionally, plays an important role in cell protection against oxidative stress and cell death acting as oxidative stress sensor. Does not play a role in methylglyoxal detoxification. The chain is Protein DJ-1alpha from Drosophila melanogaster (Fruit fly).